The chain runs to 296 residues: tRNA uridine(34) hydroxylase (296 aa).

One can recognise a Rhodanese domain in the interval 121 to 215; that stretch reads AQPDVAVIDT…YLEDIPQDQS (95 aa). C175 functions as the Cysteine persulfide intermediate in the catalytic mechanism.

It belongs to the TrhO family.

The enzyme catalyses uridine(34) in tRNA + AH2 + O2 = 5-hydroxyuridine(34) in tRNA + A + H2O. Its function is as follows. Catalyzes oxygen-dependent 5-hydroxyuridine (ho5U) modification at position 34 in tRNAs. The chain is tRNA uridine(34) hydroxylase from Roseobacter denitrificans (strain ATCC 33942 / OCh 114) (Erythrobacter sp. (strain OCh 114)).